The sequence spans 238 residues: 1-(5-phosphoribosyl)-5-[(5-phosphoribosylamino)methylideneamino] imidazole-4-carboxamide isomerase (238 aa).

The Proton acceptor role is filled by Asp8. Residue Asp129 is the Proton donor of the active site.

This sequence belongs to the HisA/HisF family.

It localises to the cytoplasm. The catalysed reaction is 1-(5-phospho-beta-D-ribosyl)-5-[(5-phospho-beta-D-ribosylamino)methylideneamino]imidazole-4-carboxamide = 5-[(5-phospho-1-deoxy-D-ribulos-1-ylimino)methylamino]-1-(5-phospho-beta-D-ribosyl)imidazole-4-carboxamide. Its pathway is amino-acid biosynthesis; L-histidine biosynthesis; L-histidine from 5-phospho-alpha-D-ribose 1-diphosphate: step 4/9. The polypeptide is 1-(5-phosphoribosyl)-5-[(5-phosphoribosylamino)methylideneamino] imidazole-4-carboxamide isomerase (Jannaschia sp. (strain CCS1)).